Here is a 219-residue protein sequence, read N- to C-terminus: MALSWLQRVELALFAAAFLCGAVAAAAMTRTQGSFSGRCPLYGVATLNGSSLALSRPSAPSLCYFVAGASGLLALYCLLLLLFWIYSSCIEDSHRGAIGLRIALAISAIAVFLVLVSACILRFGTRSLCNSIISLNTTISCSEAQKIPWTPPGTALQFYSNLHNAETSSWVNLVLWCVVLVLQVVQWKSEATPYRPLERGDPEWSSETDALVGSRLSHS.

The next 4 helical transmembrane spans lie at 9–29 (VELA…AAMT), 65–85 (FVAG…LFWI), 96–116 (GAIG…LVLV), and 167–187 (TSSW…VVQW). A disordered region spans residues 198 to 219 (ERGDPEWSSETDALVGSRLSHS). 2 positions are modified to phosphoserine: Ser206 and Ser214.

This sequence belongs to the TMEM179 family.

The protein localises to the membrane. The sequence is that of Transmembrane protein 179B (TMEM179B) from Homo sapiens (Human).